The primary structure comprises 412 residues: Alanyl-tRNA editing protein Aarsd1 (412 aa).

Positions 109 and 113 each coordinate Zn(2+). S174 is modified (phosphoserine). Residues C209 and H213 each coordinate Zn(2+).

Belongs to the class-II aminoacyl-tRNA synthetase family. Alax-L subfamily. The cofactor is Zn(2+).

The protein localises to the cytoplasm. Functions in trans to edit the amino acid moiety from incorrectly charged tRNA(Ala). The polypeptide is Alanyl-tRNA editing protein Aarsd1 (Aarsd1) (Rattus norvegicus (Rat)).